We begin with the raw amino-acid sequence, 182 residues long: MSENDGIHIEYVDEQELKREFRRFMSDPETREKAANYLYESLVDETILGIAYEVHHANKTGSGAAVEGEPEDSKPYTIVDQPDTDVFGSSNTKKAIDCHCPNCNRIVAASRFAPHLEKCMGMGRNSSRIASRRIANTRDVGTGNYFGGDEDDEDDADWSGEKRKKKISQVRTNGSKKNGKTS.

Positions glycine 61–threonine 84 are disordered. Residues cysteine 98–cysteine 119 form an SGF11-type zinc finger. Residues arginine 133–serine 182 form a disordered region. Over residues glycine 148–tryptophan 158 the composition is skewed to acidic residues.

This sequence belongs to the SGF11 family. Component of some SAGA transcription coactivator-HAT complexes. Within the SAGA complex, participates in a subcomplex of SAGA called the DUB module (deubiquitination module).

The protein localises to the nucleus. In terms of biological role, component of the transcription regulatory histone acetylation (HAT) complex SAGA, a multiprotein complex that activates transcription by remodeling chromatin and mediating histone acetylation and deubiquitination. Within the SAGA complex, participates in a subcomplex that specifically deubiquitinates histone H2B. The SAGA complex is recruited to specific gene promoters by activators, where it is required for transcription. This is SAGA-associated factor 11 homolog from Anopheles gambiae (African malaria mosquito).